The following is a 233-amino-acid chain: ATP synthase subunit a, chloroplastic (233 aa).

4 helical membrane passes run 82 to 102 (VPFIGTLFLFIFVSNWSGALI), 121 to 141 (INTTAALALLTSLAYFYAGIS), 177 to 199 (LFGNILADELVVSVLTLLVPLIV), and 211 to 231 (SSIQALIFATLAAAYIGEAIE).

This sequence belongs to the ATPase A chain family. As to quaternary structure, F-type ATPases have 2 components, CF(1) - the catalytic core - and CF(0) - the membrane proton channel. CF(1) has five subunits: alpha(3), beta(3), gamma(1), delta(1), epsilon(1). CF(0) has four main subunits: a, b, b' and c.

The protein localises to the plastid. Its subcellular location is the chloroplast thylakoid membrane. Key component of the proton channel; it plays a direct role in the translocation of protons across the membrane. The polypeptide is ATP synthase subunit a, chloroplastic (Galdieria sulphuraria (Red alga)).